The primary structure comprises 396 residues: 1-deoxy-D-xylulose 5-phosphate reductoisomerase (396 aa).

Thr15, Gly16, Ser17, Ile18, Gly41, and Asn130 together coordinate NADPH. Lys131 contacts 1-deoxy-D-xylulose 5-phosphate. NADPH is bound at residue Glu132. Asp155 serves as a coordination point for Mn(2+). 1-deoxy-D-xylulose 5-phosphate contacts are provided by Ser156, Glu157, Ser181, and His204. Glu157 contributes to the Mn(2+) binding site. Gly210 is a binding site for NADPH. 1-deoxy-D-xylulose 5-phosphate is bound by residues Ser217, Asn222, Lys223, and Glu226. A Mn(2+)-binding site is contributed by Glu226.

Belongs to the DXR family. Requires Mg(2+) as cofactor. It depends on Mn(2+) as a cofactor.

It carries out the reaction 2-C-methyl-D-erythritol 4-phosphate + NADP(+) = 1-deoxy-D-xylulose 5-phosphate + NADPH + H(+). It functions in the pathway isoprenoid biosynthesis; isopentenyl diphosphate biosynthesis via DXP pathway; isopentenyl diphosphate from 1-deoxy-D-xylulose 5-phosphate: step 1/6. In terms of biological role, catalyzes the NADPH-dependent rearrangement and reduction of 1-deoxy-D-xylulose-5-phosphate (DXP) to 2-C-methyl-D-erythritol 4-phosphate (MEP). The polypeptide is 1-deoxy-D-xylulose 5-phosphate reductoisomerase (Bifidobacterium longum (strain DJO10A)).